Reading from the N-terminus, the 421-residue chain is MSKLTIVRGFNDVLPLDSYKWQFLESKVKLILDRYNYSETRLPIVERSELFHRSVGESSDIVSKETYDFQDRNGDSLTLRPEGTAGCVRMVIENNLATRGQTQKLWYCGPMFRYERPQKGRYRQFYQLGVEAYGFDGIAIDLEVIAIAWSLFKELGISEYVTLELNSLGSSLNRQEYTQALLQYLKPYHAELDEDSIKRLDKNPLRILDSKIEKTQKILANAPKLMDFIDHDLRLRFKQTCQYLDALGVRYKLNENLVRGLDYYTGLVFEWTTDKLGSQSAICAGGRYDGLVENLGGQKTAAIGFAIGMERLLLLLEDLGKLPNQDNACDVFFILDSAQLHQSLAIVENIRQELPQLKIDMDLKFGSFKSQFKKADKSGAKVAIIIGQDELDNGFAGIKFLQQNEEQQQVAFNELINFLER.

It belongs to the class-II aminoacyl-tRNA synthetase family. In terms of assembly, homodimer.

The protein resides in the cytoplasm. The catalysed reaction is tRNA(His) + L-histidine + ATP = L-histidyl-tRNA(His) + AMP + diphosphate + H(+). The polypeptide is Histidine--tRNA ligase (Francisella tularensis subsp. novicida (strain U112)).